A 316-amino-acid chain; its full sequence is ATP synthase gamma chain (316 aa).

It belongs to the ATPase gamma chain family. As to quaternary structure, F-type ATPases have 2 components, CF(1) - the catalytic core - and CF(0) - the membrane proton channel. CF(1) has five subunits: alpha(3), beta(3), gamma(1), delta(1), epsilon(1). CF(0) has three main subunits: a, b and c.

It localises to the cellular thylakoid membrane. Produces ATP from ADP in the presence of a proton gradient across the membrane. The gamma chain is believed to be important in regulating ATPase activity and the flow of protons through the CF(0) complex. The sequence is that of ATP synthase gamma chain from Prochlorococcus marinus (strain SARG / CCMP1375 / SS120).